The sequence spans 355 residues: Peptide chain release factor 1 (355 aa).

An N5-methylglutamine modification is found at Gln233.

The protein belongs to the prokaryotic/mitochondrial release factor family. In terms of processing, methylated by PrmC. Methylation increases the termination efficiency of RF1.

The protein localises to the cytoplasm. In terms of biological role, peptide chain release factor 1 directs the termination of translation in response to the peptide chain termination codons UAG and UAA. The sequence is that of Peptide chain release factor 1 from Bacillus cereus (strain ATCC 14579 / DSM 31 / CCUG 7414 / JCM 2152 / NBRC 15305 / NCIMB 9373 / NCTC 2599 / NRRL B-3711).